The primary structure comprises 365 residues: Endophilin-B1 (365 aa).

M1 carries the post-translational modification N-acetylmethionine. The segment at 1–30 is membrane-binding amphipathic helix; sequence MNIMDFNVKKLAADAGTFLSRAVQFTEEKL. The segment at 1 to 37 is required for membrane binding; the sequence is MNIMDFNVKKLAADAGTFLSRAVQFTEEKLGQAEKTE. The region spanning 27–261 is the BAR domain; that stretch reads EEKLGQAEKT…LGSFPSNYLS (235 aa). Phosphothreonine; by CDK5 is present on T145. Residues 155-195 adopt a coiled-coil conformation; it reads YKTIAKERKLLQNKRLDLDAAKTRLKKAKAAETRNSSEQEL. Residues 305–365 enclose the SH3 domain; sequence SGSRKARVLY…VPITYLELLN (61 aa).

The protein belongs to the endophilin family. Homodimer, and heterodimer with SH3GLB2. Binds BAX; induction of apoptosis augments BAX binding. Binds DNM1, HTT, AMPH, BIN1 and ARFGAP1. Interacts with UVRAG; UVRAG bridges the interaction to BECN1 indicative for an association with the PI3K complex II (PI3KC3-C2). In terms of processing, phosphorylated at Thr-145 by CDK5; this phosphorylation is required for autophagy induction in starved neurons and facilitates homodimerization. As to expression, highly expressed in heart, skeletal muscle, kidney and placenta. Detected at lower levels in brain, colon, thymus, spleen, liver, small intestine, lung and peripheral blood leukocytes.

Its subcellular location is the cytoplasm. It is found in the golgi apparatus membrane. The protein resides in the mitochondrion outer membrane. The protein localises to the cytoplasmic vesicle. It localises to the autophagosome membrane. Its subcellular location is the midbody. Its function is as follows. May be required for normal outer mitochondrial membrane dynamics. Required for coatomer-mediated retrograde transport in certain cells. May recruit other proteins to membranes with high curvature. May promote membrane fusion. Involved in activation of caspase-dependent apoptosis by promoting BAX/BAK1 activation. Isoform 1 acts proapoptotic in fibroblasts. Involved in caspase-independent apoptosis during nutrition starvation and involved in the regulation of autophagy. Activates lipid kinase activity of PIK3C3 during autophagy probably by associating with the PI3K complex II (PI3KC3-C2). Associated with PI3KC3-C2 during autophagy may regulate the trafficking of ATG9A from the Golgi complex to the peripheral cytoplasm for the formation of autophagosomes by inducing Golgi membrane tubulation and fragmentation. Involved in regulation of degradative endocytic trafficking and cytokinesis, probably in the context of PI3KC3-C2. Isoform 2 acts antiapoptotic in neuronal cells; involved in maintenance of mitochondrial morphology and promotes neuronal viability. This Homo sapiens (Human) protein is Endophilin-B1 (SH3GLB1).